A 747-amino-acid chain; its full sequence is ATP-dependent DNA helicase Hel308 (747 aa).

Residues Q29 and 47–54 (VPTASGKT) contribute to the ATP site. Residues 34–200 (DAGVADGESL…WLDAELVDSS (167 aa)) form the Helicase ATP-binding domain. Residues 145–148 (DEVH) carry the DEAH box motif. A Helicase C-terminal domain is found at 234–434 (PTEAVVRETL…REPSMRTHLL (201 aa)). The disordered stretch occupies residues 711–747 (AAGHQQPEMDGVTPDADVKESAAAAGTDDGQANLGDF).

Belongs to the helicase family. Hel308 subfamily. As to quaternary structure, monomer.

It carries out the reaction Couples ATP hydrolysis with the unwinding of duplex DNA by translocating in the 3'-5' direction.. The enzyme catalyses ATP + H2O = ADP + phosphate + H(+). Its function is as follows. DNA-dependent ATPase and 3'-5' DNA helicase that may be involved in repair of stalled replication forks. The chain is ATP-dependent DNA helicase Hel308 from Natronomonas pharaonis (strain ATCC 35678 / DSM 2160 / CIP 103997 / JCM 8858 / NBRC 14720 / NCIMB 2260 / Gabara) (Halobacterium pharaonis).